Reading from the N-terminus, the 641-residue chain is Threonine--tRNA ligase (641 aa).

The region spanning methionine 1–threonine 61 is the TGS domain. The tract at residues aspartate 242–proline 533 is catalytic. The Zn(2+) site is built by cysteine 333, histidine 384, and histidine 510.

Belongs to the class-II aminoacyl-tRNA synthetase family. Homodimer. Zn(2+) serves as cofactor.

The protein resides in the cytoplasm. It catalyses the reaction tRNA(Thr) + L-threonine + ATP = L-threonyl-tRNA(Thr) + AMP + diphosphate + H(+). Functionally, catalyzes the attachment of threonine to tRNA(Thr) in a two-step reaction: L-threonine is first activated by ATP to form Thr-AMP and then transferred to the acceptor end of tRNA(Thr). Also edits incorrectly charged L-seryl-tRNA(Thr). In Prochlorococcus marinus (strain NATL2A), this protein is Threonine--tRNA ligase.